The sequence spans 233 residues: MSACQTPLIVALDFPTRDAALKLADQLDPALCRVKVGKELFTSSASGIVESLCAKGFEVFLDLKFHDIPNTTAMAVKAAAEMGVWMVNVHCSGGLRMMSACREVLAKRSGPQPLLIGVTVLTSMEREDLAGIGLDIEPQEQVLRLAALAEKAGMDGLVCSALEAPALKAAHPSLQLVTPGIRPAGSAQDDQRRILTPRQALDAGSDYLVIGRPISQAADPAQALAAVVAEIRS.

Residues aspartate 13, lysine 35, 62-71 (DLKFHDIPNT), threonine 122, arginine 182, glutamine 191, glycine 211, and arginine 212 each bind substrate. The active-site Proton donor is lysine 64.

This sequence belongs to the OMP decarboxylase family. Type 1 subfamily. In terms of assembly, homodimer.

It catalyses the reaction orotidine 5'-phosphate + H(+) = UMP + CO2. It functions in the pathway pyrimidine metabolism; UMP biosynthesis via de novo pathway; UMP from orotate: step 2/2. Catalyzes the decarboxylation of orotidine 5'-monophosphate (OMP) to uridine 5'-monophosphate (UMP). This Pseudomonas putida (strain W619) protein is Orotidine 5'-phosphate decarboxylase.